A 627-amino-acid polypeptide reads, in one-letter code: WPP domain-interacting tail-anchored protein 2 (627 aa).

Coiled coils occupy residues 81 to 152 (CGIL…RRTL), 188 to 218 (LEKSLSRELELEKKLMEFQQNEEQLKLKLHY), and 312 to 542 (TLRE…KILR). The segment at 577–597 (SLQEDERTREEPEKQSVSEKS) is disordered. The segment covering 580–597 (EDERTREEPEKQSVSEKS) has biased composition (basic and acidic residues). The helical transmembrane segment at 606–626 (LKHILVVALVFVLFCSFFGVT) threads the bilayer.

Component of Ran complexes at least composed of WIT1 or WIT2, RANGAP1 or RANGAP2, and WIP1 or WIP2 or WIP3. Interacts with KAKU1. Core component of the LINC complex which is composed of inner nuclear membrane SUN domain-containing proteins coupled to outer nuclear membrane WIP and WIT proteins. The LINC complex also involves nucleoskeletal proteins CRWN/LINC and possibly KAKU4 and the cytoskeletal myosin KAKU1. Interacts with WIP1, WIP2 and WIP3. In terms of tissue distribution, ubiquitous.

The protein localises to the membrane. Its function is as follows. Together with WIT1, required for the nuclear envelope docking of RANGAP proteins in root tips. Plays a role in nuclear shape determination. As component of the SUN-WIP-WIT2-KAKU1 complex, mediates the transfer of cytoplasmic forces to the nuclear envelope (NE), leading to nuclear shape changes. This Arabidopsis thaliana (Mouse-ear cress) protein is WPP domain-interacting tail-anchored protein 2 (WIT2).